A 302-amino-acid chain; its full sequence is Protein translocase subunit SecF (302 aa).

Transmembrane regions (helical) follow at residues phenylalanine 12–glycine 32, tyrosine 138–phenylalanine 158, alanine 166–isoleucine 186, leucine 190–valine 210, phenylalanine 249–glycine 269, and valine 272–methionine 292.

Belongs to the SecD/SecF family. SecF subfamily. Forms a complex with SecD. Part of the essential Sec protein translocation apparatus which comprises SecA, SecYEG and auxiliary proteins SecDF. Other proteins may also be involved.

It localises to the cell inner membrane. Functionally, part of the Sec protein translocase complex. Interacts with the SecYEG preprotein conducting channel. SecDF uses the proton motive force (PMF) to complete protein translocation after the ATP-dependent function of SecA. This chain is Protein translocase subunit SecF, found in Petrotoga mobilis (strain DSM 10674 / SJ95).